The chain runs to 259 residues: Aliphatic sulfonates import ATP-binding protein SsuB 2 (259 aa).

Residues 17 to 238 enclose the ABC transporter domain; the sequence is LDILGLWKGF…VRSSQAFTSI (222 aa). 49-56 provides a ligand contact to ATP; the sequence is GRSGCGKS.

The protein belongs to the ABC transporter superfamily. Aliphatic sulfonates importer (TC 3.A.1.17.2) family. As to quaternary structure, the complex is composed of two ATP-binding proteins (SsuB), two transmembrane proteins (SsuC) and a solute-binding protein (SsuA).

Its subcellular location is the cell inner membrane. The catalysed reaction is ATP + H2O + aliphatic sulfonate-[sulfonate-binding protein]Side 1 = ADP + phosphate + aliphatic sulfonateSide 2 + [sulfonate-binding protein]Side 1.. Its function is as follows. Part of the ABC transporter complex SsuABC involved in aliphatic sulfonates import. Responsible for energy coupling to the transport system. The protein is Aliphatic sulfonates import ATP-binding protein SsuB 2 of Agrobacterium fabrum (strain C58 / ATCC 33970) (Agrobacterium tumefaciens (strain C58)).